We begin with the raw amino-acid sequence, 572 residues long: Dityrosine transporter 1 (572 aa).

2 disordered regions span residues 1–28 (MGSE…STFH) and 49–95 (RANI…SPDT). At 1–110 (MGSEPFQKKN…YTYFSKDQRL (110 aa)) the chain is on the cytoplasmic side. Polar residues predominate over residues 13-28 (LQINSQESGTTRSTFH). Basic and acidic residues predominate over residues 50–62 (ANIDHDVFHEHPD). The segment covering 83–95 (SSNSQSRDPSPDT) has biased composition (polar residues). Residues 111–131 (IIFGIIIFIGFLGPMSGNIYI) form a helical membrane-spanning segment. The Extracellular portion of the chain corresponds to 132–149 (PALPLLQREYDVSATTIN). Residues 150–170 (ATVSVFMAVFSVGPLFWGALA) traverse the membrane as a helical segment. Over 171 to 184 (DFGGRKFLYMVSLS) the chain is Cytoplasmic. The chain crosses the membrane as a helical span at residues 185 to 205 (LMLIVNILLAAVPVNIAALFV). Residues 206 to 207 (LR) lie on the Extracellular side of the membrane. A helical transmembrane segment spans residues 208-228 (IFQAFASSSVISLGAGTVTDV). Topologically, residues 229-240 (VPPKHRGKAIAY) are cytoplasmic. Residues 241 to 261 (FMMGPNMGPIIAPIVAGLILM) form a helical membrane-spanning segment. The Extracellular segment spans residues 262-267 (KGNYWR). The chain crosses the membrane as a helical span at residues 268–288 (WLFGFTSIMTGIALILVTALL). Residues 289-366 (PETLRCIVGN…TLYWKMIKCP (78 aa)) are Cytoplasmic-facing. The helical transmembrane segment at 367-387 (PIIITSVSTALLFSSYYAFSV) threads the bilayer. Over 388-398 (TFSYYLEHDYR) the chain is Extracellular. The helical transmembrane segment at 399–419 (FTMLEIGAAYVCPGVAMLLGS) threads the bilayer. Residues 420-446 (QSGGHLSDYLRSRWIKSHPKKKFPAEF) are Cytoplasmic-facing. The helical transmembrane segment at 447 to 469 (RLLLNLIGILLTICGTIGYGWAI) threads the bilayer. Topologically, residues 470–472 (FFH) are extracellular. A helical membrane pass occupies residues 473–493 (YHFVVLLVFSALTAFGMTWCS). At 494-520 (NTSMTYLTELFPKRAAGTVAVSSFFRN) the chain is on the cytoplasmic side. A helical transmembrane segment spans residues 521 to 541 (VGAAISSAIILQLCNAMGIGW). Cys542 is a topological domain (extracellular). Residues 543–563 (FTGLGLCSSISLIGILYLLIF) form a helical membrane-spanning segment. Residues 548 to 572 (LCSSISLIGILYLLIFQRKYTAKEF) are required for the localization to the prospore membrane. At 564-572 (QRKYTAKEF) the chain is on the cytoplasmic side.

Belongs to the major facilitator superfamily. CAR1 family. In terms of processing, phosphorylated.

It localises to the prospore membrane. Prospore-specific dityrosine transporter responsible for translocation of dityrosine through the prospore membrane and required for the formation of the outermost layer of the spore. In Saccharomyces cerevisiae (strain ATCC 204508 / S288c) (Baker's yeast), this protein is Dityrosine transporter 1 (DTR1).